The following is a 290-amino-acid chain: Zinc finger protein-like 1 homolog (290 aa).

The segment at 1-43 adopts a B box-type; degenerate zinc-finger fold; sequence MGLCKCPKRQVTTQFCFEHRVNVCENCMVVNHTKCTVQSYIQW. The RING-type; atypical zinc finger occupies 53 to 101; sequence CPLCGSPLDNEDCVRLICYHVFHWKCLNAKQQSLPANTAPGGHTCPTCS. The span at 156 to 168 shows a compositional bias: polar residues; the sequence is NGNTFASSMSQTR. The disordered stretch occupies residues 156 to 175; the sequence is NGNTFASSMSQTRSNERPES. A helical transmembrane segment spans residues 249–269; it reads WFLVLGGCIGFVCIIYVLATL.

It belongs to the ZFPL1 family.

It is found in the membrane. The sequence is that of Zinc finger protein-like 1 homolog from Aedes aegypti (Yellowfever mosquito).